We begin with the raw amino-acid sequence, 154 residues long: Myoglobin (154 aa).

The Globin domain maps to 2-148; it reads GLSDGEWQLV…FRNDIAAKYK (147 aa). A Phosphoserine modification is found at serine 4. Nitrite is bound at residue histidine 65. An O2-binding site is contributed by histidine 65. A Phosphothreonine modification is found at threonine 68. Histidine 94 is a heme b binding site.

The protein belongs to the globin family. Monomeric.

It is found in the cytoplasm. The protein resides in the sarcoplasm. It catalyses the reaction Fe(III)-heme b-[protein] + nitric oxide + H2O = Fe(II)-heme b-[protein] + nitrite + 2 H(+). The enzyme catalyses H2O2 + AH2 = A + 2 H2O. Its function is as follows. Monomeric heme protein which primary function is to store oxygen and facilitate its diffusion within muscle tissues. Reversibly binds oxygen through a pentacoordinated heme iron and enables its timely and efficient release as needed during periods of heightened demand. Depending on the oxidative conditions of tissues and cells, and in addition to its ability to bind oxygen, it also has a nitrite reductase activity whereby it regulates the production of bioactive nitric oxide. Under stress conditions, like hypoxia and anoxia, it also protects cells against reactive oxygen species thanks to its pseudoperoxidase activity. This is Myoglobin (MB) from Lutra lutra (European river otter).